The primary structure comprises 170 residues: MDIVPISPYERMRPLRESKELRIKSFDDHRWPHKNNPVMTKNMIENYFYYIGINDKIQCVHCGGVISGFLEEDTHRISYEHRRHFPKCPVGKYRHPGYHLDAERLKSFKNWRYENIVRKMDLVAAGLFYTGIEDRCACHQCGNELYEWEAGDNPKEEHKRLFPDCKLSSY.

BIR repeat units lie at residues 22–92 (RIKS…PVGK) and 104–169 (RLKS…KLSS).

May act as an apoptosis inhibitor. This Ostreid herpesvirus 1 (isolate France) (OsHV-1) protein is Putative apoptosis inhibitor ORF87.